A 132-amino-acid polypeptide reads, in one-letter code: DNA-directed RNA polymerase subunit omega (132 aa).

It belongs to the RNA polymerase subunit omega family. As to quaternary structure, the RNAP catalytic core consists of 2 alpha, 1 beta, 1 beta' and 1 omega subunit. When a sigma factor is associated with the core the holoenzyme is formed, which can initiate transcription.

The catalysed reaction is RNA(n) + a ribonucleoside 5'-triphosphate = RNA(n+1) + diphosphate. In terms of biological role, promotes RNA polymerase assembly. Latches the N- and C-terminal regions of the beta' subunit thereby facilitating its interaction with the beta and alpha subunits. This is DNA-directed RNA polymerase subunit omega from Bartonella quintana (strain Toulouse) (Rochalimaea quintana).